A 273-amino-acid polypeptide reads, in one-letter code: Dermonecrotic toxin LhSicTox-alphaIA1ii (273 aa).

His5 is an active-site residue. Mg(2+) contacts are provided by Glu25 and Asp27. His41 functions as the Nucleophile in the catalytic mechanism. Intrachain disulfides connect Cys45/Cys51 and Cys47/Cys190. Asp85 lines the Mg(2+) pocket.

Belongs to the arthropod phospholipase D family. Class II subfamily. The cofactor is Mg(2+). Expressed by the venom gland.

The protein resides in the secreted. The enzyme catalyses an N-(acyl)-sphingosylphosphocholine = an N-(acyl)-sphingosyl-1,3-cyclic phosphate + choline. The catalysed reaction is an N-(acyl)-sphingosylphosphoethanolamine = an N-(acyl)-sphingosyl-1,3-cyclic phosphate + ethanolamine. It carries out the reaction a 1-acyl-sn-glycero-3-phosphocholine = a 1-acyl-sn-glycero-2,3-cyclic phosphate + choline. It catalyses the reaction a 1-acyl-sn-glycero-3-phosphoethanolamine = a 1-acyl-sn-glycero-2,3-cyclic phosphate + ethanolamine. Dermonecrotic toxins cleave the phosphodiester linkage between the phosphate and headgroup of certain phospholipids (sphingolipid and lysolipid substrates), forming an alcohol (often choline) and a cyclic phosphate. This toxin acts on sphingomyelin (SM). It may also act on ceramide phosphoethanolamine (CPE), lysophosphatidylcholine (LPC) and lysophosphatidylethanolamine (LPE), but not on lysophosphatidylserine (LPS), and lysophosphatidylglycerol (LPG). It acts by transphosphatidylation, releasing exclusively cyclic phosphate products as second products. Induces dermonecrosis, hemolysis, increased vascular permeability, edema, inflammatory response, and platelet aggregation. This is Dermonecrotic toxin LhSicTox-alphaIA1ii from Loxosceles hirsuta (Recluse spider).